Here is a 339-residue protein sequence, read N- to C-terminus: Ketol-acid reductoisomerase (NADP(+)) (339 aa).

Residues 1–182 (MRVYYDRDAD…GGGRSGIIET (182 aa)) form the KARI N-terminal Rossmann domain. Residues 24-27 (YGSQ), Arg-48, Ser-51, Thr-53, and 83-86 (DEHQ) contribute to the NADP(+) site. His-108 is an active-site residue. Gly-134 is an NADP(+) binding site. Residues 183–328 (NFREECETDL…ARLRGMMPWI (146 aa)) enclose the KARI C-terminal knotted domain. The Mg(2+) site is built by Asp-191, Glu-195, Glu-227, and Glu-231. Ser-252 is a binding site for substrate.

The protein belongs to the ketol-acid reductoisomerase family. It depends on Mg(2+) as a cofactor.

It catalyses the reaction (2R)-2,3-dihydroxy-3-methylbutanoate + NADP(+) = (2S)-2-acetolactate + NADPH + H(+). The enzyme catalyses (2R,3R)-2,3-dihydroxy-3-methylpentanoate + NADP(+) = (S)-2-ethyl-2-hydroxy-3-oxobutanoate + NADPH + H(+). The protein operates within amino-acid biosynthesis; L-isoleucine biosynthesis; L-isoleucine from 2-oxobutanoate: step 2/4. Its pathway is amino-acid biosynthesis; L-valine biosynthesis; L-valine from pyruvate: step 2/4. Involved in the biosynthesis of branched-chain amino acids (BCAA). Catalyzes an alkyl-migration followed by a ketol-acid reduction of (S)-2-acetolactate (S2AL) to yield (R)-2,3-dihydroxy-isovalerate. In the isomerase reaction, S2AL is rearranged via a Mg-dependent methyl migration to produce 3-hydroxy-3-methyl-2-ketobutyrate (HMKB). In the reductase reaction, this 2-ketoacid undergoes a metal-dependent reduction by NADPH to yield (R)-2,3-dihydroxy-isovalerate. In Caulobacter sp. (strain K31), this protein is Ketol-acid reductoisomerase (NADP(+)).